A 156-amino-acid chain; its full sequence is S-ribosylhomocysteine lyase (156 aa).

H56, H60, and C123 together coordinate Fe cation.

This sequence belongs to the LuxS family. Homodimer. Fe cation is required as a cofactor.

The catalysed reaction is S-(5-deoxy-D-ribos-5-yl)-L-homocysteine = (S)-4,5-dihydroxypentane-2,3-dione + L-homocysteine. Involved in the synthesis of autoinducer 2 (AI-2) which is secreted by bacteria and is used to communicate both the cell density and the metabolic potential of the environment. The regulation of gene expression in response to changes in cell density is called quorum sensing. Catalyzes the transformation of S-ribosylhomocysteine (RHC) to homocysteine (HC) and 4,5-dihydroxy-2,3-pentadione (DPD). The protein is S-ribosylhomocysteine lyase of Staphylococcus aureus (strain bovine RF122 / ET3-1).